Consider the following 460-residue polypeptide: MTKLWGGRFQKETDRLVEDFHSSISFDRRLYKYDIRGSIAHARMLGKAGIIPPEEARAIADGLQEVLADIEAGRAGFSVEAEDIHMNVEQLLTAKVGEVGKKLHTARSRNDQVALDIRMYLKDEIDQITGLLRELQAALLDLAEKHTGTVMPGYTHLQRAQPVTLAHHLLAYCQMFRRDEERLADCRRRTDVMPLGAGALAGTTFPLDREYVAEQLGFAAVAENSLDAVSDRDFAVEFAAAASLIMVHLSRFCEEIVLWSSAEFAFIELDDAYSTGSSMMPQKKNPDVAELIRGKCGRVFGDLQALLTMLKGLPLAYNKDLQEDKEALFDAVDTVKKCLLVFKPMLETMQVKKERMAEAARGGFTNATDLADYLVRKGLPFRQAHEAVGKAVLYCLERGRSLDRLSLDELRQFSPLVEEDVYEAIDISRCVEARRVTGGPAPGAVLEAVKKARQRLRERP.

This sequence belongs to the lyase 1 family. Argininosuccinate lyase subfamily.

The protein localises to the cytoplasm. The catalysed reaction is 2-(N(omega)-L-arginino)succinate = fumarate + L-arginine. It functions in the pathway amino-acid biosynthesis; L-arginine biosynthesis; L-arginine from L-ornithine and carbamoyl phosphate: step 3/3. The polypeptide is Argininosuccinate lyase (Pelotomaculum thermopropionicum (strain DSM 13744 / JCM 10971 / SI)).